Here is a 650-residue protein sequence, read N- to C-terminus: Serine/threonine-protein kinase oca2 (650 aa).

Residues 1-14 are compositionally biased toward polar residues; sequence MSVTPPNVQFNLNG. Disordered regions lie at residues 1-210 and 222-288; these read MSVT…PHDI and HHGK…KSSA. Residue Ser72 is modified to Phosphoserine. The span at 78–98 shows a compositional bias: basic and acidic residues; it reads NHIDPKLAEDRYRSSAARHFE. Polar residues predominate over residues 140-154; that stretch reads PSGSTGYTSPALSQN. Composition is skewed to basic residues over residues 222 to 231 and 245 to 257; these read HHGKHGHHGH and HDKH…HEKH. Residues 258–279 show a composition bias toward basic and acidic residues; that stretch reads HSSLDLRRFFKSHQKTDKEKKP. Ser286 carries the post-translational modification Phosphoserine. One can recognise a Protein kinase domain in the interval 302 to 614; that stretch reads GKFGRMLGSG…IHRVFADNWI (313 aa). ATP is bound by residues 308–316 and Lys331; that span reads LGSGAGGSV. The active-site Proton acceptor is the Asp425. A disordered region spans residues 549-570; it reads PIRKTDESHSPNSKTDNSSTHK.

The protein belongs to the protein kinase superfamily. Ser/Thr protein kinase family.

The protein localises to the cytoplasm. It carries out the reaction L-seryl-[protein] + ATP = O-phospho-L-seryl-[protein] + ADP + H(+). It catalyses the reaction L-threonyl-[protein] + ATP = O-phospho-L-threonyl-[protein] + ADP + H(+). Functionally, overexpression causes cell cycle arrest. In Schizosaccharomyces pombe (strain 972 / ATCC 24843) (Fission yeast), this protein is Serine/threonine-protein kinase oca2.